The primary structure comprises 219 residues: ATP-dependent Clp protease proteolytic subunit 1, mitochondrial (219 aa).

The transit peptide at 1-23 (MLRRILTTSSVRNLTSSTQARVG) directs the protein to the mitochondrion. Serine 118 (nucleophile) is an active-site residue. The active site involves histidine 143.

Belongs to the peptidase S14 family. In terms of assembly, tetradecamer that assembles into a two heptameric rings with a central cavity.

It is found in the mitochondrion matrix. The catalysed reaction is Hydrolysis of proteins to small peptides in the presence of ATP and magnesium. alpha-casein is the usual test substrate. In the absence of ATP, only oligopeptides shorter than five residues are hydrolyzed (such as succinyl-Leu-Tyr-|-NHMec, and Leu-Tyr-Leu-|-Tyr-Trp, in which cleavage of the -Tyr-|-Leu- and -Tyr-|-Trp bonds also occurs).. In terms of biological role, clp cleaves peptides in various proteins in a process that requires ATP hydrolysis. Clp may be responsible for a fairly general and central housekeeping function rather than for the degradation of specific substrates. The chain is ATP-dependent Clp protease proteolytic subunit 1, mitochondrial from Caenorhabditis briggsae.